The chain runs to 374 residues: Putative zinc metalloprotease R01501 (374 aa).

His-26 serves as a coordination point for Zn(2+). Residue Glu-27 is part of the active site. A Zn(2+)-binding site is contributed by His-30. 4 helical membrane passes run 36–55 (WSGIRILAFSVGFGPELFGW), 112–134 (AATVAAGPIANFLLAIAIFAVLF), 301–323 (VLNFAAVLSVSIGLLNLMPVPVL), and 348–367 (LAFRIGFAMVLMLTVFAAWN). The PDZ domain maps to 126-199 (AIAIFAVLFS…LPITVRIERE (74 aa)).

Belongs to the peptidase M50B family. Zn(2+) serves as cofactor.

The protein resides in the cell inner membrane. The sequence is that of Putative zinc metalloprotease R01501 from Rhizobium meliloti (strain 1021) (Ensifer meliloti).